A 793-amino-acid polypeptide reads, in one-letter code: Protocadherin beta-7 (793 aa).

Positions 1-26 are cleaved as a signal peptide; that stretch reads MEARVERAVQKRQVLFLCVFLGMSWA. The Extracellular segment spans residues 27–688; sequence GAEPLRYFVA…DQANLLTVYL (662 aa). Cadherin domains are found at residues 35–133, 138–242, 247–347, 352–451, and 456–561; these read VAEE…APVF, ISLK…APDF, YKVQ…RPEL, LTSP…APAF, and YTLF…SPFV. An N-linked (GlcNAc...) asparagine glycan is attached at Asn169. N-linked (GlcNAc...) asparagine glycans are attached at residues Asn418 and Asn436. Asn567 carries N-linked (GlcNAc...) asparagine glycosylation. In terms of domain architecture, Cadherin 6 spans 568 to 671; the sequence is SSAPCTEPLP…LVDGFSQPYL (104 aa). A helical membrane pass occupies residues 689-709; it reads VVALASVSSLFLLSVLLFVAV. Over 710–793 the chain is Cytoplasmic; it reads RLCRRSRAAP…NRPFQNNLGF (84 aa).

The protein localises to the cell membrane. Its function is as follows. Potential calcium-dependent cell-adhesion protein. May be involved in the establishment and maintenance of specific neuronal connections in the brain. The protein is Protocadherin beta-7 (PCDHB7) of Pan troglodytes (Chimpanzee).